Here is a 230-residue protein sequence, read N- to C-terminus: Ureidoacrylate amidohydrolase RutB (230 aa).

Residue Asp-23 is the Proton acceptor of the active site. Lys-132 is a catalytic residue. Catalysis depends on Cys-165, which acts as the Nucleophile.

It belongs to the isochorismatase family. RutB subfamily.

The catalysed reaction is (Z)-3-ureidoacrylate + H2O + H(+) = (Z)-3-aminoacrylate + NH4(+) + CO2. It catalyses the reaction (Z)-3-ureidoacrylate + H2O = (Z)-3-aminoacrylate + carbamate + H(+). The enzyme catalyses (Z)-2-methylureidoacrylate + H2O + H(+) = (Z)-2-methylaminoacrylate + NH4(+) + CO2. Hydrolyzes ureidoacrylate to form aminoacrylate and carbamate. The carbamate hydrolyzes spontaneously, thereby releasing one of the nitrogen atoms of the pyrimidine ring as ammonia and one of its carbon atoms as CO2. The protein is Ureidoacrylate amidohydrolase RutB of Yersinia enterocolitica serotype O:8 / biotype 1B (strain NCTC 13174 / 8081).